The primary structure comprises 567 residues: MLDTILINVFRRDGDDDDDDGQDPALQELYSSWALFILLVLLIGALLTSYYVQSKKIRAIHETVISVFVGMVVGLIIRVSPGLIIQNMVSFHSTYFFNVLLPPIILNSGYELHQSNFFRNIGTILTFAFAGTFISAVTLGVLVYIFSFLNFENLSMTFVEALSMGATLSATDPVTVLAIFNSYKVDQKLYTIIFGESILNDAVAIVMFETLQQFQGKTLHFFTLFSGIGIFIITFFISLLIGVSIGLITALLLKYSYLRRYPSIESCIILLMAYTSYFFSNGCHMSGVVSLLFCGITLKHYAFFNMSYKAKLSTKYVFRVLAQLSENFIFIYLGMSLFTQVDLVYKPIFILITTVAVTASRYMNVFPLSNLLNKFHRQRNGNLIDHIPYSYQMMLFWAGLRGAVGVALAAGFEGENAQTLRATTLVVVVLTLIIFGGTTARMLEILHIETGVAADVDSDTEIGMLPWQQSPEFDLENSAMELSDASAEPVVVDQQFTTEHFDEGNIAPTLSKKVSSTFEQYQRAAGAFNQFFHSSRDDQAQWLTRFDEEVIKPVLLERDNLKNGTKK.

Topologically, residues 1 to 31 are lumenal; the sequence is MLDTILINVFRRDGDDDDDDGQDPALQELYS. Residues 32–52 form a helical membrane-spanning segment; sequence SWALFILLVLLIGALLTSYYV. At 53–64 the chain is on the cytoplasmic side; that stretch reads QSKKIRAIHETV. Residues 65 to 85 form a helical membrane-spanning segment; the sequence is ISVFVGMVVGLIIRVSPGLII. Over 86-87 the chain is Lumenal; that stretch reads QN. The chain crosses the membrane as a helical span at residues 88-108; it reads MVSFHSTYFFNVLLPPIILNS. The Cytoplasmic segment spans residues 109 to 128; sequence GYELHQSNFFRNIGTILTFA. The chain crosses the membrane as a helical span at residues 129–149; it reads FAGTFISAVTLGVLVYIFSFL. Topologically, residues 150 to 159 are lumenal; that stretch reads NFENLSMTFV. Residues 160-180 form a helical membrane-spanning segment; it reads EALSMGATLSATDPVTVLAIF. Topologically, residues 181 to 188 are cytoplasmic; the sequence is NSYKVDQK. A helical transmembrane segment spans residues 189-209; sequence LYTIIFGESILNDAVAIVMFE. The Lumenal portion of the chain corresponds to 210-227; that stretch reads TLQQFQGKTLHFFTLFSG. The chain crosses the membrane as a helical span at residues 228-248; that stretch reads IGIFIITFFISLLIGVSIGLI. Over 249–277 the chain is Cytoplasmic; sequence TALLLKYSYLRRYPSIESCIILLMAYTSY. Residues 278–298 form a helical membrane-spanning segment; the sequence is FFSNGCHMSGVVSLLFCGITL. At 299-315 the chain is on the lumenal side; the sequence is KHYAFFNMSYKAKLSTK. Residues 316–338 form a helical membrane-spanning segment; sequence YVFRVLAQLSENFIFIYLGMSLF. Residues 339–347 are Cytoplasmic-facing; it reads TQVDLVYKP. The helical transmembrane segment at 348–366 threads the bilayer; the sequence is IFILITTVAVTASRYMNVF. The Lumenal portion of the chain corresponds to 367-392; it reads PLSNLLNKFHRQRNGNLIDHIPYSYQ. A helical transmembrane segment spans residues 393-413; the sequence is MMLFWAGLRGAVGVALAAGFE. Over 414–424 the chain is Cytoplasmic; that stretch reads GENAQTLRATT. The helical transmembrane segment at 425–445 threads the bilayer; it reads LVVVVLTLIIFGGTTARMLEI. Over 446–567 the chain is Lumenal; the sequence is LHIETGVAAD…RDNLKNGTKK (122 aa). Phosphoserine is present on Ser-515.

The protein belongs to the monovalent cation:proton antiporter 1 (CPA1) transporter (TC 2.A.36) family.

The protein resides in the golgi apparatus membrane. This is an uncharacterized protein from Schizosaccharomyces pombe (strain 972 / ATCC 24843) (Fission yeast).